Consider the following 475-residue polypeptide: Ribulose bisphosphate carboxylase large chain (475 aa).

Positions 1-2 (MS) are excised as a propeptide. P3 bears the N-acetylproline mark. The residue at position 14 (K14) is an N6,N6,N6-trimethyllysine. Substrate is bound by residues N123 and T173. Residue K175 is the Proton acceptor of the active site. K177 contacts substrate. Mg(2+) contacts are provided by K201, D203, and E204. K201 bears the N6-carboxylysine mark. Catalysis depends on H294, which acts as the Proton acceptor. Substrate contacts are provided by R295, H327, and S379.

It belongs to the RuBisCO large chain family. Type I subfamily. Heterohexadecamer of 8 large chains and 8 small chains; disulfide-linked. The disulfide link is formed within the large subunit homodimers. Requires Mg(2+) as cofactor. Post-translationally, the disulfide bond which can form in the large chain dimeric partners within the hexadecamer appears to be associated with oxidative stress and protein turnover.

Its subcellular location is the plastid. It is found in the chloroplast. The enzyme catalyses 2 (2R)-3-phosphoglycerate + 2 H(+) = D-ribulose 1,5-bisphosphate + CO2 + H2O. The catalysed reaction is D-ribulose 1,5-bisphosphate + O2 = 2-phosphoglycolate + (2R)-3-phosphoglycerate + 2 H(+). In terms of biological role, ruBisCO catalyzes two reactions: the carboxylation of D-ribulose 1,5-bisphosphate, the primary event in carbon dioxide fixation, as well as the oxidative fragmentation of the pentose substrate in the photorespiration process. Both reactions occur simultaneously and in competition at the same active site. The chain is Ribulose bisphosphate carboxylase large chain from Pelargonium hortorum (Common geranium).